The sequence spans 461 residues: Fumarate hydratase class II (461 aa).

Residues 97 to 99 (SGT), 127 to 130 (HPND), 137 to 139 (SSN), and Thr185 contribute to the substrate site. The active-site Proton donor/acceptor is the His186. Ser316 is a catalytic residue. Residues Ser317 and 322-324 (KVN) contribute to the substrate site.

The protein belongs to the class-II fumarase/aspartase family. Fumarase subfamily. As to quaternary structure, homotetramer.

It is found in the cytoplasm. The enzyme catalyses (S)-malate = fumarate + H2O. It functions in the pathway carbohydrate metabolism; tricarboxylic acid cycle; (S)-malate from fumarate: step 1/1. Involved in the TCA cycle. Catalyzes the stereospecific interconversion of fumarate to L-malate. The sequence is that of Fumarate hydratase class II from Staphylococcus aureus (strain COL).